We begin with the raw amino-acid sequence, 400 residues long: Acetate kinase (400 aa).

Residue Asn10 coordinates Mg(2+). Residue Lys17 coordinates ATP. Position 91 (Arg91) interacts with substrate. Asp150 serves as the catalytic Proton donor/acceptor. Residues 210 to 214 (HLGNG), 285 to 287 (DCR), and 333 to 337 (GIGEN) contribute to the ATP site. Glu387 serves as a coordination point for Mg(2+).

The protein belongs to the acetokinase family. Homodimer. Requires Mg(2+) as cofactor. Mn(2+) serves as cofactor.

Its subcellular location is the cytoplasm. The catalysed reaction is acetate + ATP = acetyl phosphate + ADP. The protein operates within metabolic intermediate biosynthesis; acetyl-CoA biosynthesis; acetyl-CoA from acetate: step 1/2. Functionally, catalyzes the formation of acetyl phosphate from acetate and ATP. Can also catalyze the reverse reaction. The sequence is that of Acetate kinase from Erwinia tasmaniensis (strain DSM 17950 / CFBP 7177 / CIP 109463 / NCPPB 4357 / Et1/99).